A 654-amino-acid chain; its full sequence is Broad substrate specificity ATP-binding cassette transporter ABCG2 (654 aa).

At 1 to 394 the chain is on the cytoplasmic side; the sequence is MSSSNVEVFI…KNLLGNPQAS (394 aa). Residues 37 to 286 enclose the ABC transporter domain; that stretch reads LSFHNICYRV…FESAGYHCEA (250 aa). Residues 80–87, 184–190, E211, and H243 each bind ATP; these read GPTGGGKS and RGVSGGE. The ABC transmembrane type-2 domain occupies 388–650; the sequence is LGNPQASIAQ…TIAYLKLLFL (263 aa). A helical membrane pass occupies residues 395 to 415; sequence IAQIIVTVILGLVIGAIYFGL. The Extracellular portion of the chain corresponds to 416 to 427; sequence NNDSTGIQNRAG. N417 carries an N-linked (GlcNAc...) asparagine glycan. The chain crosses the membrane as a helical span at residues 428–448; that stretch reads VLFFLTTNQCFSSVSAVELFV. Residues 449–476 are Cytoplasmic-facing; sequence VEKKLFIHEYISGYYRVSSYFFGKLLSD. The chain crosses the membrane as a helical span at residues 477–497; sequence LLPMRMLPSIIFTCIVYFMLG. Residues 498–505 are Extracellular-facing; sequence LKPTADAF. The helical transmembrane segment at 506 to 526 threads the bilayer; that stretch reads FIMMFTLMMVAYSASSMALAI. Residues 527–534 lie on the Cytoplasmic side of the membrane; the sequence is AAGQSVVS. Residues 535–555 traverse the membrane as a helical segment; that stretch reads VATLLMTICFVFMMIFSGLLV. N-linked (GlcNAc...) asparagine glycans are attached at residues N556, N595, and N599. Topologically, residues 556-629 are extracellular; that stretch reads NLTTIASWLS…LSPWGLWKNH (74 aa). A disulfide bond links C591 and C607. A helical transmembrane segment spans residues 630–650; sequence VALACMIVIFLTIAYLKLLFL. Residues 651–654 lie on the Cytoplasmic side of the membrane; the sequence is KKYS.

Belongs to the ABC transporter superfamily. ABCG family. Eye pigment precursor importer (TC 3.A.1.204) subfamily. Homodimer; disulfide-linked. The minimal functional unit is a homodimer, but the major oligomeric form in plasma membrane is a homotetramer with possibility of higher order oligomerization up to homododecamers. In terms of processing, N-glycosylated. Glycosylation-deficient ABCG2 is normally expressed and functional. Post-translationally, phosphorylated. Phosphorylation may regulate the localization to the plasma membrane, the homooligomerization and therefore, the activity of the transporter.

It localises to the cell membrane. The protein resides in the apical cell membrane. Its subcellular location is the mitochondrion membrane. It carries out the reaction ATP + H2O + xenobioticSide 1 = ADP + phosphate + xenobioticSide 2.. The enzyme catalyses urate(in) + ATP + H2O = urate(out) + ADP + phosphate + H(+). It catalyses the reaction indoxyl sulfate(in) + ATP + H2O = indoxyl sulfate(out) + ADP + phosphate + H(+). The catalysed reaction is sphing-4-enine 1-phosphate(in) + ATP + H2O = sphing-4-enine 1-phosphate(out) + ADP + phosphate + H(+). It carries out the reaction estrone 3-sulfate(in) + ATP + H2O = estrone 3-sulfate(out) + ADP + phosphate + H(+). The enzyme catalyses dehydroepiandrosterone 3-sulfate(in) + ATP + H2O = dehydroepiandrosterone 3-sulfate(out) + ADP + phosphate + H(+). It catalyses the reaction 4-methylumbelliferone sulfate(in) + ATP + H2O = 4-methylumbelliferone sulfate(out) + ADP + phosphate + H(+). The catalysed reaction is 5,7-dimethyl-2-methylamino-4-(3-pyridylmethyl)-1,3-benzothiazol-6-yl beta-D-glucuronate(in) + ATP + H2O = 5,7-dimethyl-2-methylamino-4-(3-pyridylmethyl)-1,3-benzothiazol-6-yl beta-D-glucuronate(out) + ADP + phosphate + H(+). It carries out the reaction 4-methylumbelliferone beta-D-glucuronate(in) + ATP + H2O = 4-methylumbelliferone beta-D-glucuronate(out) + ADP + phosphate + H(+). The enzyme catalyses 5,7-dimethyl-2-methylamino-4-(3-pyridylmethyl)-1,3-benzothiazol-6-yl sulfate(in) + ATP + H2O = 5,7-dimethyl-2-methylamino-4-(3-pyridylmethyl)-1,3-benzothiazol-6-yl sulfate(out) + ADP + phosphate + H(+). It catalyses the reaction 17beta-estradiol 17-O-(beta-D-glucuronate)(in) + ATP + H2O = 17beta-estradiol 17-O-(beta-D-glucuronate)(out) + ADP + phosphate + H(+). The catalysed reaction is methotrexate(in) + ATP + H2O = methotrexate(out) + ADP + phosphate + H(+). It carries out the reaction riboflavin(in) + ATP + H2O = riboflavin(out) + ADP + phosphate + H(+). The enzyme catalyses pheophorbide a(in) + ATP + H2O = pheophorbide a(out) + ADP + phosphate + H(+). It catalyses the reaction itaconate(in) + ATP + H2O = itaconate(out) + ADP + phosphate + H(+). Broad substrate specificity ATP-dependent transporter of the ATP-binding cassette (ABC) family that actively extrudes a wide variety of physiological compounds, dietary toxins and xenobiotics from cells. Involved in porphyrin homeostasis, mediating the export of protoporphyrin IX (PPIX) from both mitochondria to cytosol and cytosol to extracellular space, it also functions in the cellular export of heme. Also mediates the efflux of sphingosine-1-P from cells. Acts as a urate exporter functioning in both renal and extrarenal urate excretion. In kidney, it also functions as a physiological exporter of the uremic toxin indoxyl sulfate. Also involved in the excretion of steroids like estrone 3-sulfate/E1S, 3beta-sulfooxy-androst-5-en-17-one/DHEAS, and other sulfate conjugates. Mediates the secretion of the riboflavin and biotin vitamins into milk. Extrudes pheophorbide a, a phototoxic porphyrin catabolite of chlorophyll, reducing its bioavailability. Plays an important role in the exclusion of xenobiotics from the brain. It confers to cells a resistance to multiple drugs and other xenobiotics including mitoxantrone, pheophorbide, camptothecin, methotrexate, azidothymidine, and the anthracyclines daunorubicin and doxorubicin, through the control of their efflux. In placenta, it limits the penetration of drugs from the maternal plasma into the fetus. May play a role in early stem cell self-renewal by blocking differentiation. In inflammatory macrophages, exports itaconate from the cytosol to the extracellular compartment and limits the activation of TFEB-dependent lysosome biogenesis involved in antibacterial innate immune response. The protein is Broad substrate specificity ATP-binding cassette transporter ABCG2 (ABCG2) of Macaca mulatta (Rhesus macaque).